The sequence spans 431 residues: Enolase (431 aa).

Gln167 provides a ligand contact to (2R)-2-phosphoglycerate. The active-site Proton donor is the Glu209. 3 residues coordinate Mg(2+): Asp246, Glu289, and Asp316. (2R)-2-phosphoglycerate contacts are provided by Lys341, Arg370, Ser371, and Lys392. The active-site Proton acceptor is the Lys341.

The protein belongs to the enolase family. In terms of assembly, component of the RNA degradosome, a multiprotein complex involved in RNA processing and mRNA degradation. Mg(2+) is required as a cofactor.

The protein localises to the cytoplasm. It localises to the secreted. The protein resides in the cell surface. The catalysed reaction is (2R)-2-phosphoglycerate = phosphoenolpyruvate + H2O. The protein operates within carbohydrate degradation; glycolysis; pyruvate from D-glyceraldehyde 3-phosphate: step 4/5. Functionally, catalyzes the reversible conversion of 2-phosphoglycerate (2-PG) into phosphoenolpyruvate (PEP). It is essential for the degradation of carbohydrates via glycolysis. This Shewanella loihica (strain ATCC BAA-1088 / PV-4) protein is Enolase.